The primary structure comprises 493 residues: Mitochondrial distribution and morphology protein 10 (493 aa).

It belongs to the MDM10 family. In terms of assembly, component of the ER-mitochondria encounter structure (ERMES) or MDM complex, composed of MMM1, MDM10, MDM12 and MDM34. Associates with the mitochondrial outer membrane sorting assembly machinery SAM(core) complex, which consists of SAM35, SAM37 and SAM50, to form a SAM(holo) complex.

It localises to the mitochondrion outer membrane. Functionally, component of the ERMES/MDM complex, which serves as a molecular tether to connect the endoplasmic reticulum and mitochondria. Components of this complex are involved in the control of mitochondrial shape and protein biogenesis and may function in phospholipid exchange. MDM10 is involved in the late assembly steps of the general translocase of the mitochondrial outer membrane (TOM complex). Functions in the TOM40-specific route of the assembly of outer membrane beta-barrel proteins, including the association of TOM40 with the receptor TOM22 and small TOM proteins. Can associate with the SAM(core) complex as well as the MDM12-MMM1 complex, both involved in late steps of the major beta-barrel assembly pathway, that is responsible for biogenesis of all outer membrane beta-barrel proteins. May act as a switch that shuttles between both complexes and channels precursor proteins into the TOM40-specific pathway. Plays a role in mitochondrial morphology and in the inheritance of mitochondria. The chain is Mitochondrial distribution and morphology protein 10 from Saccharomyces cerevisiae (strain ATCC 204508 / S288c) (Baker's yeast).